The chain runs to 418 residues: Serine hydroxymethyltransferase (418 aa).

(6S)-5,6,7,8-tetrahydrofolate is bound by residues Leu121 and 125-127 (GHL). Residue Lys230 is modified to N6-(pyridoxal phosphate)lysine. 355-357 (SPF) contacts (6S)-5,6,7,8-tetrahydrofolate.

This sequence belongs to the SHMT family. Homodimer. Pyridoxal 5'-phosphate is required as a cofactor.

It localises to the cytoplasm. It carries out the reaction (6R)-5,10-methylene-5,6,7,8-tetrahydrofolate + glycine + H2O = (6S)-5,6,7,8-tetrahydrofolate + L-serine. The protein operates within one-carbon metabolism; tetrahydrofolate interconversion. It functions in the pathway amino-acid biosynthesis; glycine biosynthesis; glycine from L-serine: step 1/1. Its function is as follows. Catalyzes the reversible interconversion of serine and glycine with tetrahydrofolate (THF) serving as the one-carbon carrier. This reaction serves as the major source of one-carbon groups required for the biosynthesis of purines, thymidylate, methionine, and other important biomolecules. Also exhibits THF-independent aldolase activity toward beta-hydroxyamino acids, producing glycine and aldehydes, via a retro-aldol mechanism. In Streptococcus agalactiae serotype III (strain NEM316), this protein is Serine hydroxymethyltransferase.